Reading from the N-terminus, the 523-residue chain is ATP synthase subunit alpha (523 aa).

173–180 serves as a coordination point for ATP; that stretch reads GDRQTGKT.

The protein belongs to the ATPase alpha/beta chains family. In terms of assembly, F-type ATPases have 2 components, CF(1) - the catalytic core - and CF(0) - the membrane proton channel. CF(1) has five subunits: alpha(3), beta(3), gamma(1), delta(1), epsilon(1). CF(0) has three main subunits: a(1), b(2) and c(9-12). The alpha and beta chains form an alternating ring which encloses part of the gamma chain. CF(1) is attached to CF(0) by a central stalk formed by the gamma and epsilon chains, while a peripheral stalk is formed by the delta and b chains.

The protein resides in the cell membrane. It carries out the reaction ATP + H2O + 4 H(+)(in) = ADP + phosphate + 5 H(+)(out). Produces ATP from ADP in the presence of a proton gradient across the membrane. The alpha chain is a regulatory subunit. The polypeptide is ATP synthase subunit alpha (Streptomyces griseus subsp. griseus (strain JCM 4626 / CBS 651.72 / NBRC 13350 / KCC S-0626 / ISP 5235)).